Reading from the N-terminus, the 349-residue chain is tRNA pseudouridine synthase D (349 aa).

Phenylalanine 27 is a substrate binding site. Residue aspartate 80 is the Nucleophile of the active site. Substrate is bound at residue asparagine 129. Positions 155–303 constitute a TRUD domain; sequence GVPNYFGAQR…VEAARRAMLL (149 aa). Residue phenylalanine 329 coordinates substrate.

It belongs to the pseudouridine synthase TruD family.

The enzyme catalyses uridine(13) in tRNA = pseudouridine(13) in tRNA. Responsible for synthesis of pseudouridine from uracil-13 in transfer RNAs. This chain is tRNA pseudouridine synthase D, found in Escherichia fergusonii (strain ATCC 35469 / DSM 13698 / CCUG 18766 / IAM 14443 / JCM 21226 / LMG 7866 / NBRC 102419 / NCTC 12128 / CDC 0568-73).